The primary structure comprises 46 residues: uncharacterized protein (46 aa).

The interval methionine 1 to valine 46 is disordered.

This is an uncharacterized protein from Treponema pallidum (strain Nichols).